A 70-amino-acid chain; its full sequence is ATP synthase subunit c (70 aa).

The next 2 membrane-spanning stretches (helical) occupy residues 4–24 (IAAA…NGLI) and 49–69 (GIAL…LAFF).

This sequence belongs to the ATPase C chain family. F-type ATPases have 2 components, F(1) - the catalytic core - and F(0) - the membrane proton channel. F(1) has five subunits: alpha(3), beta(3), gamma(1), delta(1), epsilon(1). F(0) has three main subunits: a(1), b(2) and c(10-14). The alpha and beta chains form an alternating ring which encloses part of the gamma chain. F(1) is attached to F(0) by a central stalk formed by the gamma and epsilon chains, while a peripheral stalk is formed by the delta and b chains. The F(1)F(0) complex interacts with SpoIIIJ and YqjG; YqgA is found in the same complex.

It localises to the cell membrane. Functionally, f(1)F(0) ATP synthase produces ATP from ADP in the presence of a proton or sodium gradient. F-type ATPases consist of two structural domains, F(1) containing the extramembraneous catalytic core and F(0) containing the membrane proton channel, linked together by a central stalk and a peripheral stalk. During catalysis, ATP synthesis in the catalytic domain of F(1) is coupled via a rotary mechanism of the central stalk subunits to proton translocation. Key component of the F(0) channel; it plays a direct role in translocation across the membrane. A homomeric c-ring of between 10-14 subunits forms the central stalk rotor element with the F(1) delta and epsilon subunits. This is ATP synthase subunit c from Bacillus subtilis (strain 168).